A 553-amino-acid chain; its full sequence is Membrane protein insertase YidC (553 aa).

A helical transmembrane segment spans residues 3 to 23 (IKRTILWVIFSLSVVLLFDNW). The disordered stretch occupies residues 44 to 64 (AAAPGGTPAGDVPKAAAPAAA). 4 consecutive transmembrane segments (helical) span residues 359 to 379 (LLGN…LVFF), 429 to 449 (LGGC…YWVL), 467 to 487 (LASP…MFVQ), and 507 to 527 (PIAF…YWVV).

Belongs to the OXA1/ALB3/YidC family. Type 1 subfamily. In terms of assembly, interacts with the Sec translocase complex via SecD. Specifically interacts with transmembrane segments of nascent integral membrane proteins during membrane integration.

Its subcellular location is the cell inner membrane. Functionally, required for the insertion and/or proper folding and/or complex formation of integral membrane proteins into the membrane. Involved in integration of membrane proteins that insert both dependently and independently of the Sec translocase complex, as well as at least some lipoproteins. Aids folding of multispanning membrane proteins. The polypeptide is Membrane protein insertase YidC (Ralstonia nicotianae (strain ATCC BAA-1114 / GMI1000) (Ralstonia solanacearum)).